We begin with the raw amino-acid sequence, 1187 residues long: uncharacterized protein (1187 aa).

Polar residues predominate over residues 38–57; the sequence is KNNQDIPTSNTNISPKPISQ. Disordered regions lie at residues 38–127, 189–215, 248–287, 358–415, 443–490, 536–689, 752–840, and 1079–1187; these read KNNQ…NSPT, ISRS…IHLN, TQPP…SQLQ, NNNS…NSNS, FPNN…INNN, QFPF…SSLN, SINN…NKSI, and HNNN…NLQK. 4 stretches are compositionally biased toward low complexity: residues 71-84, 104-124, 190-215, and 248-274; these read KPIV…STLI, PSSS…SIPN, SRSS…IHLN, and TQPP…QAPH. The span at 443–455 shows a compositional bias: polar residues; that stretch reads FPNNTDENYPSDH. 6 stretches are compositionally biased toward low complexity: residues 458 to 490, 543 to 570, 585 to 653, 662 to 689, 752 to 790, and 797 to 809; these read NDNN…INNN, TTES…SSSA, INNL…SNIN, PNSP…SSLN, SINN…TTNN, and NYKI…NIDN. A compositionally biased stretch (acidic residues) spans 815–832; it reads NDDDNDDDDDDDVDDNDD. Composition is skewed to low complexity over residues 1079-1149 and 1156-1174; these read HNNN…PSNN and KNNN…NNTN.

This is an uncharacterized protein from Dictyostelium discoideum (Social amoeba).